Reading from the N-terminus, the 120-residue chain is MFLLYEYDIFWAFLIISSFIPILAFLISGILAPISKGPEKLSSYESGIEPIGDAWLQFRIRYYMFALIFVVFDVETVFLYPWAMSFDVLGVSVFIEAFIFVLILIVGSVYAWRKGALEWS.

3 consecutive transmembrane segments (helical) span residues 9–29 (IFWA…LISG), 64–84 (MFAL…PWAM), and 88–108 (VLGV…IVGS).

Belongs to the complex I subunit 3 family. As to quaternary structure, NDH is composed of at least 16 different subunits, 5 of which are encoded in the nucleus.

It localises to the plastid. The protein localises to the chloroplast thylakoid membrane. It catalyses the reaction a plastoquinone + NADH + (n+1) H(+)(in) = a plastoquinol + NAD(+) + n H(+)(out). The enzyme catalyses a plastoquinone + NADPH + (n+1) H(+)(in) = a plastoquinol + NADP(+) + n H(+)(out). In terms of biological role, NDH shuttles electrons from NAD(P)H:plastoquinone, via FMN and iron-sulfur (Fe-S) centers, to quinones in the photosynthetic chain and possibly in a chloroplast respiratory chain. The immediate electron acceptor for the enzyme in this species is believed to be plastoquinone. Couples the redox reaction to proton translocation, and thus conserves the redox energy in a proton gradient. In Glycine max (Soybean), this protein is NAD(P)H-quinone oxidoreductase subunit 3, chloroplastic.